Consider the following 1562-residue polypeptide: E3 ubiquitin-protein ligase listerin (1562 aa).

HEAT repeat units lie at residues 41–78 (SLYS…DFNQ), 127–164 (KFLK…KDPA), 175–217 (EQLL…SAVL), 262–301 (ETVL…ITSK), 304–348 (LKVC…VSRT), 495–532 (SAIS…FLDS), 555–592 (STYQ…VALS), 813–850 (IRYA…DYNC), 908–945 (YYSR…KTVR), 997–1037 (FKSL…WLDS), 1047–1085 (TVRL…DSLS), 1188–1226 (INQS…SDVD), 1263–1298 (NSFI…KEAG), and 1299–1339 (LINR…NFSP). Residues 1508–1555 (CAICYSILHAVDRKLPSKTCPTCKNKFHGACLYKWFRSSGNNTCPLCR) form an RING-type zinc finger.

It belongs to the LTN1 family. Component of the ribosome quality control complex (RQC), composed of the E3 ubiquitin ligase RKR1/LTN1, RQC1 and RQC2, as well as CDC48 and its ubiquitin-binding cofactors associated with the 60S ribosomal subunits.

Its subcellular location is the nucleus. The protein resides in the cytoplasm. The protein localises to the cytosol. It catalyses the reaction S-ubiquitinyl-[E2 ubiquitin-conjugating enzyme]-L-cysteine + [acceptor protein]-L-lysine = [E2 ubiquitin-conjugating enzyme]-L-cysteine + N(6)-ubiquitinyl-[acceptor protein]-L-lysine.. It participates in protein modification; protein ubiquitination. Functionally, E3 ubiquitin-protein ligase component of the ribosome quality control complex (RQC), a ribosome-associated complex that mediates ubiquitination and extraction of incompletely synthesized nascent chains for proteasomal degradation. Mediates ubiquitination of proteins derived from mRNAs lacking stop codons (non-stop proteins) and other translation arrest products induced by poly-lysine sequences and tandem rare codons. Ubiquitination leads to CDC48 recruitment for extraction and degradation of the incomplete translation product. May indirectly play a role in chromatin function and transcription. The protein is E3 ubiquitin-protein ligase listerin of Saccharomyces cerevisiae (strain ATCC 204508 / S288c) (Baker's yeast).